The chain runs to 209 residues: Large ribosomal subunit protein uL4 (209 aa).

The interval Arg45–Ser77 is disordered.

Belongs to the universal ribosomal protein uL4 family. Part of the 50S ribosomal subunit.

In terms of biological role, one of the primary rRNA binding proteins, this protein initially binds near the 5'-end of the 23S rRNA. It is important during the early stages of 50S assembly. It makes multiple contacts with different domains of the 23S rRNA in the assembled 50S subunit and ribosome. Forms part of the polypeptide exit tunnel. The protein is Large ribosomal subunit protein uL4 of Flavobacterium johnsoniae (strain ATCC 17061 / DSM 2064 / JCM 8514 / BCRC 14874 / CCUG 350202 / NBRC 14942 / NCIMB 11054 / UW101) (Cytophaga johnsonae).